Consider the following 370-residue polypeptide: Aminomethyltransferase (370 aa).

The protein belongs to the GcvT family. The glycine cleavage system is composed of four proteins: P, T, L and H.

It catalyses the reaction N(6)-[(R)-S(8)-aminomethyldihydrolipoyl]-L-lysyl-[protein] + (6S)-5,6,7,8-tetrahydrofolate = N(6)-[(R)-dihydrolipoyl]-L-lysyl-[protein] + (6R)-5,10-methylene-5,6,7,8-tetrahydrofolate + NH4(+). In terms of biological role, the glycine cleavage system catalyzes the degradation of glycine. The protein is Aminomethyltransferase of Corynebacterium aurimucosum (strain ATCC 700975 / DSM 44827 / CIP 107346 / CN-1) (Corynebacterium nigricans).